A 1117-amino-acid chain; its full sequence is Protocadherin-11 X-linked (1117 aa).

An N-terminal signal peptide occupies residues 1 to 23 (MDLLSGTHIFAVLLACIVFQSGA). Topologically, residues 24 to 812 (QEKNYTIREE…ASSPSSDYVK (789 aa)) are extracellular. Residues Asn-27 and Asn-48 are each glycosylated (N-linked (GlcNAc...) asparagine). Cadherin domains follow at residues 27–139 (NYTI…APLF), 140–249 (PATV…RPVF), 250–355 (KENE…IPSI), 362–466 (NPIN…APVF), 467–570 (TQPF…SPVF), 571–673 (THNE…KPVF), and 677–795 (SSNY…TPVT). Asn-344 carries an N-linked (GlcNAc...) asparagine glycan. Residue Asn-553 is glycosylated (N-linked (GlcNAc...) asparagine). The chain crosses the membrane as a helical span at residues 813-833 (IVVAIVAGTITVILVIFITAV). Residues 834–1117 (VRCQQSPHLK…DGNSDPESGK (284 aa)) are Cytoplasmic-facing. Polar residues predominate over residues 1029–1039 (TVEIWTHPQPQ). Residues 1029-1117 (TVEIWTHPQP…DGNSDPESGK (89 aa)) form a disordered region.

In terms of tissue distribution, expressed in adrenal gland, brain, heart, kidney, lung, prostate, skeletal muscle, testis and thymus.

Its subcellular location is the cell membrane. Its function is as follows. Potential calcium-dependent cell-adhesion protein. The chain is Protocadherin-11 X-linked (PCDH11X) from Sus scrofa (Pig).